The following is a 390-amino-acid chain: Probable galacturonosyltransferase-like 9 (390 aa).

Topologically, residues 1 to 10 (MRLRFPMKSA) are cytoplasmic. The chain crosses the membrane as a helical; Signal-anchor for type II membrane protein span at residues 11–31 (VLAFAIFLVFIPLFSVGIRMI). Residues 32-390 (PGRLTAVSAT…SELTEDSSFF (359 aa)) are Lumenal-facing. Residues Asn-205 and Asn-223 are each glycosylated (N-linked (GlcNAc...) asparagine).

The protein belongs to the glycosyltransferase 8 family.

The protein localises to the golgi apparatus membrane. It participates in glycan metabolism; pectin biosynthesis. Its function is as follows. May be involved in pectin and/or xylans biosynthesis in cell walls. In Arabidopsis thaliana (Mouse-ear cress), this protein is Probable galacturonosyltransferase-like 9 (GATL9).